The primary structure comprises 868 residues: LPS-assembly protein LptD (868 aa).

The N-terminal stretch at 1–24 is a signal peptide; that stretch reads MLKGIHKYLLMCFGTVLFTVQANA.

The protein belongs to the LptD family. In terms of assembly, component of the lipopolysaccharide transport and assembly complex. Interacts with LptE and LptA.

It is found in the cell outer membrane. In terms of biological role, together with LptE, is involved in the assembly of lipopolysaccharide (LPS) at the surface of the outer membrane. This Francisella tularensis subsp. tularensis (strain FSC 198) protein is LPS-assembly protein LptD.